The following is a 119-amino-acid chain: Holo-[acyl-carrier-protein] synthase (119 aa).

Residues Asp-8 and Glu-59 each contribute to the Mg(2+) site.

This sequence belongs to the P-Pant transferase superfamily. AcpS family. Mg(2+) is required as a cofactor.

The protein resides in the cytoplasm. It carries out the reaction apo-[ACP] + CoA = holo-[ACP] + adenosine 3',5'-bisphosphate + H(+). In terms of biological role, transfers the 4'-phosphopantetheine moiety from coenzyme A to a Ser of acyl-carrier-protein. This Lactococcus lactis subsp. lactis (strain IL1403) (Streptococcus lactis) protein is Holo-[acyl-carrier-protein] synthase.